Here is a 55-residue protein sequence, read N- to C-terminus: MAKSNTIQIKLVSSADTGYFYVTKKNARAQTGKLEMRKYDPVARKHVAFREAKIK.

Belongs to the bacterial ribosomal protein bL33 family.

This Gluconacetobacter diazotrophicus (strain ATCC 49037 / DSM 5601 / CCUG 37298 / CIP 103539 / LMG 7603 / PAl5) protein is Large ribosomal subunit protein bL33.